The chain runs to 213 residues: Ribosomal RNA large subunit methyltransferase E (213 aa).

S-adenosyl-L-methionine-binding residues include G60, W62, D80, D96, and D121. Residue K161 is the Proton acceptor of the active site.

This sequence belongs to the class I-like SAM-binding methyltransferase superfamily. RNA methyltransferase RlmE family.

Its subcellular location is the cytoplasm. It carries out the reaction uridine(2552) in 23S rRNA + S-adenosyl-L-methionine = 2'-O-methyluridine(2552) in 23S rRNA + S-adenosyl-L-homocysteine + H(+). Its function is as follows. Specifically methylates the uridine in position 2552 of 23S rRNA at the 2'-O position of the ribose in the fully assembled 50S ribosomal subunit. The chain is Ribosomal RNA large subunit methyltransferase E from Xylella fastidiosa (strain 9a5c).